A 165-amino-acid polypeptide reads, in one-letter code: Transmembrane protein 128 (165 aa).

4 helical membrane passes run 49–69 (NIHSGFWILASIVVTYYVDFF), 81–101 (WFLCGSALLLVSLSIAFYCIV), 119–139 (LIPITTASFIAAGICFNIALW), and 144–164 (FFTPLLLFTQFMGVVMFITLL).

It is found in the membrane. The sequence is that of Transmembrane protein 128 (TMEM128) from Homo sapiens (Human).